A 136-amino-acid chain; its full sequence is S-protein homolog 25 (136 aa).

A signal peptide spans 1-20; the sequence is MNHSVFVILITITYFGLNQA. 2 N-linked (GlcNAc...) asparagine glycosylation sites follow: N71 and N84.

Belongs to the plant self-incompatibility (S1) protein family.

The protein localises to the secreted. The chain is S-protein homolog 25 from Arabidopsis thaliana (Mouse-ear cress).